Consider the following 115-residue polypeptide: NADH-ubiquinone oxidoreductase chain 3 (115 aa).

3 helical membrane passes run 4 to 24 (LTALLVNITLSMLLIIIAFWL), 55 to 75 (FFLVAITFLLFDLEIALLLPL), and 83 to 103 (YINIMMSTAFILVSVLALGLA).

It belongs to the complex I subunit 3 family. As to quaternary structure, core subunit of respiratory chain NADH dehydrogenase (Complex I) which is composed of 45 different subunits. Interacts with TMEM186. Interacts with TMEM242.

Its subcellular location is the mitochondrion inner membrane. The enzyme catalyses a ubiquinone + NADH + 5 H(+)(in) = a ubiquinol + NAD(+) + 4 H(+)(out). Its function is as follows. Core subunit of the mitochondrial membrane respiratory chain NADH dehydrogenase (Complex I) which catalyzes electron transfer from NADH through the respiratory chain, using ubiquinone as an electron acceptor. Essential for the catalytic activity of complex I. This chain is NADH-ubiquinone oxidoreductase chain 3, found in Peromyscus polionotus (Oldfield mouse).